The sequence spans 1366 residues: DNA-directed RNA polymerase subunit beta (1366 aa).

Belongs to the RNA polymerase beta chain family. The RNAP catalytic core consists of 2 alpha, 1 beta, 1 beta' and 1 omega subunit. When a sigma factor is associated with the core the holoenzyme is formed, which can initiate transcription.

The enzyme catalyses RNA(n) + a ribonucleoside 5'-triphosphate = RNA(n+1) + diphosphate. Functionally, DNA-dependent RNA polymerase catalyzes the transcription of DNA into RNA using the four ribonucleoside triphosphates as substrates. This Polynucleobacter necessarius subsp. necessarius (strain STIR1) protein is DNA-directed RNA polymerase subunit beta.